The chain runs to 183 residues: Large ribosomal subunit protein bL32m (183 aa).

Cys99, Cys102, Cys112, and Cys115 together coordinate Zn(2+).

Belongs to the bacterial ribosomal protein bL32 family. In terms of assembly, component of the mitochondrial large ribosomal subunit (mt-LSU).

The protein resides in the mitochondrion. Component of the mitochondrial large ribosomal subunit (mt-LSU). The mitochondrial ribosome (mitoribosome) is a large ribonucleoprotein complex responsible for the synthesis of proteins inside mitochondria. This is Large ribosomal subunit protein bL32m (mrpl-32) from Caenorhabditis elegans.